A 195-amino-acid polypeptide reads, in one-letter code: HTH-type transcriptional regulator BetI (195 aa).

The HTH tetR-type domain occupies 8–68; sequence SIRRRQLIDA…ATMRDITSQL (61 aa). A DNA-binding region (H-T-H motif) is located at residues 31 to 50; it reads TIAQIARRAGVSTGIISHYF.

It functions in the pathway amine and polyamine biosynthesis; betaine biosynthesis via choline pathway [regulation]. Its function is as follows. Repressor involved in the biosynthesis of the osmoprotectant glycine betaine. It represses transcription of the choline transporter BetT and the genes of BetAB involved in the synthesis of glycine betaine. This Escherichia coli (strain K12 / DH10B) protein is HTH-type transcriptional regulator BetI.